A 329-amino-acid polypeptide reads, in one-letter code: Ketol-acid reductoisomerase (NADP(+)) (329 aa).

The KARI N-terminal Rossmann domain maps to 2–182 (TQLFYDTDAD…GGTRAGILET (181 aa)). NADP(+) is bound by residues 25–28 (YGSQ), S51, S53, and 83–86 (DEFQ). The active site involves H108. NADP(+) is bound at residue G134. Residues 183–328 (NFKEETETDL…KGLRAMFSWL (146 aa)) enclose the KARI C-terminal knotted domain. Residues D191, E195, E227, and E231 each contribute to the Mg(2+) site. Position 252 (S252) interacts with substrate.

The protein belongs to the ketol-acid reductoisomerase family. Mg(2+) is required as a cofactor.

The catalysed reaction is (2R)-2,3-dihydroxy-3-methylbutanoate + NADP(+) = (2S)-2-acetolactate + NADPH + H(+). It catalyses the reaction (2R,3R)-2,3-dihydroxy-3-methylpentanoate + NADP(+) = (S)-2-ethyl-2-hydroxy-3-oxobutanoate + NADPH + H(+). It participates in amino-acid biosynthesis; L-isoleucine biosynthesis; L-isoleucine from 2-oxobutanoate: step 2/4. Its pathway is amino-acid biosynthesis; L-valine biosynthesis; L-valine from pyruvate: step 2/4. Involved in the biosynthesis of branched-chain amino acids (BCAA). Catalyzes an alkyl-migration followed by a ketol-acid reduction of (S)-2-acetolactate (S2AL) to yield (R)-2,3-dihydroxy-isovalerate. In the isomerase reaction, S2AL is rearranged via a Mg-dependent methyl migration to produce 3-hydroxy-3-methyl-2-ketobutyrate (HMKB). In the reductase reaction, this 2-ketoacid undergoes a metal-dependent reduction by NADPH to yield (R)-2,3-dihydroxy-isovalerate. This chain is Ketol-acid reductoisomerase (NADP(+)), found in Prochlorococcus marinus (strain MIT 9515).